The sequence spans 240 residues: Small ribosomal subunit protein uS2c (240 aa).

Belongs to the universal ribosomal protein uS2 family.

It localises to the plastid. The protein resides in the chloroplast. In Cycas taitungensis (Prince sago), this protein is Small ribosomal subunit protein uS2c (rps2).